The primary structure comprises 459 residues: MPWSEVSPGHFQRPLGANEKFIKSIGDRAHPLGREHWSVTAQARFKTSDALQGGQERVPELHKAWKTMRFAHPSIASIANAETLDYYVPSPDGLEDWMQQTFFVVEEDTSSQQYIASLQPSPYLTAHYLVRTSELILHTAHWRTDGFGAMQLVNAFFEAFAGLDDRDPIDLPWGQEVARLVPSIEEVLDLPEEATPEIKAATAECMATLALTRGAVGVSYQGDLTTLPAGTHSVQGRLSQSETKAIEEACCTRGISLLSAVHASVAATTYAGASSEAKSKPYTSTMRFNLRPYVPEPYSSPAYASALYTGGYMVQVPATHSWTENVREYNSAYRRGLSKGFLRARREYALNVQELLKKNIAMDGPPPSEVDISSIDDAELLVRPVYHGKSGDVEILDVSIGVETLTRQLYCFVWTFRGQLGFNLVYNEAYYNLTTATVLLDTLKNVLLTELGIRDDRAI.

It belongs to the trichothecene O-acetyltransferase family.

The protein operates within secondary metabolite biosynthesis. In terms of biological role, acetyltransferase; part of the gene cluster that mediates the biosynthesis of azaphilone pigments (MonAzPs), a complex mixture of compounds with a common azaphilone skeleton very widely used as food colorants. PigM and pigO are involved in the elimination of the omega-1 alcohol with pigM acting as an O-acetyltransferase that synthesizes the O-11 acetyl intermediate whereas pigO eliminates acetic acid to yield an intermediate with a C10(11) double bond. The first step of the pathway is performed by the nrPKS pigA that forms the hexaketide precursor from successive condensations of five malonyl-CoA units, with a simple acetyl-CoA starter unit. The role of esterase pigG is not clear, but it may play at most a supplementary role in the formation of the benzaldehyde produced by the pigA nrPKS. This very reactive benzaldehyde is intercepted by the pigC ketoreductase that to provide the first stable enzyme-free MonAzPs intermediate, 6-(4-hydroxy-2-oxopentyl)-3-methyl-2,4-dioxocyclohexane carbaldehyde, also known as M7PKS-1. The FAD-dependent monooxygenase pigN hydroxylates M7PKS-1 at C-4, which triggers the formation of the pyran ring. PigJ, pigK and pigD are involved in the acetylation of the pyran ring. PigJ and pigK form the two subunits of a dedicated fungal FAS that produces the side chain fatty acyl moiety of MonAzPs and pigD transfers the fatty acyl chain to the C-4 alcohol. PigM and pigO are involved in the elimination of the omega-1 alcohol. PigM acts as an O-acetyltransferase that synthesizes the putative O-11 acetyl intermediate whereas pigO eliminates acetic acid to yield an intermediate with a C10(11) double bond. The dehydration of the C-11 alcohol followed by the reduction of the C6(7) double bond by the NAD(P)H-dependent oxidoreductase pigE increases the electrophilicity of the C-5 ketone of the resulting acyl benzopyran. This in turn sets up the C-5 ketone for an intramolecular Knoevenagel aldol condensation with the C-20 enol of the side chain. This condensation affords the characteristic linear tricyclic carbon skeletons of the yellow pigments that serve as the common precursors for the classical yellow pigments monascin and ankaflavin, orange pigments rubopunctatin and monascorubrin, and red pigments ribropunctamine and monascorubramine. The FAD-dependent oxidoreductase pigF is especially invoved in the biosynthesis of orange and red pigments via desaturation of C6(7). This chain is Acetyltransferase pigO, found in Monascus ruber (Mold).